A 500-amino-acid chain; its full sequence is V-type proton ATPase subunit B (500 aa).

It belongs to the ATPase alpha/beta chains family. As to quaternary structure, V-ATPase is a heteromultimeric enzyme composed of a peripheral catalytic V1 complex (main components: subunits A, B, C, D, E, and F) attached to an integral membrane V0 proton pore complex (main component: the proteolipid protein).

Its function is as follows. Non-catalytic subunit of the peripheral V1 complex of vacuolar ATPase. V-ATPase is responsible for acidifying a variety of intracellular compartments in eukaryotic cells. The protein is V-type proton ATPase subunit B of Cyanidium caldarium (Red alga).